A 65-amino-acid polypeptide reads, in one-letter code: Sec-independent protein translocase protein TatA (65 aa).

The helical transmembrane segment at 1 to 21 threads the bilayer; that stretch reads MFGLGGQELVLILLIILLLFG.

This sequence belongs to the TatA/E family. Forms a complex with TatC.

The protein localises to the cell inner membrane. Its function is as follows. Part of the twin-arginine translocation (Tat) system that transports large folded proteins containing a characteristic twin-arginine motif in their signal peptide across membranes. TatA could form the protein-conducting channel of the Tat system. This Chlorobium phaeobacteroides (strain DSM 266 / SMG 266 / 2430) protein is Sec-independent protein translocase protein TatA.